The primary structure comprises 100 residues: Small ribosomal subunit protein uS14c (100 aa).

A compositionally biased stretch (basic and acidic residues) spans 1-10 (MARKGLIERE). Residues 1–29 (MARKGLIEREKKRKKLEQKYHSIRGSSKK) are disordered.

This sequence belongs to the universal ribosomal protein uS14 family. As to quaternary structure, part of the 30S ribosomal subunit.

Its subcellular location is the plastid. It is found in the chloroplast. Binds 16S rRNA, required for the assembly of 30S particles. This is Small ribosomal subunit protein uS14c from Acorus calamus (Sweet flag).